Here is a 520-residue protein sequence, read N- to C-terminus: Sodium-dependent dicarboxylate transporter SdcS (520 aa).

The next 14 helical transmembrane spans lie at 30–50, 55–75, 77–97, 104–124, 160–180, 207–227, 242–262, 298–318, 323–343, 362–382, 399–419, 428–448, 452–472, and 491–511; these read AGQLIGLILGPLLFLLTLLFF, LPWKGVYVLAITLWIATWWIT, AIPIAATSLLPIVLLPLGHIL, SEYGNDIIFLFLGGFILAIAM, SMFVSNTAAVMIMIPIGLAII, IGYAGTIGGLGTLIGTPPLII, FAKWMIVGIPTVIVLLGITWL, KVVQTIFVLASLLWITREFLL, VTSSVADGTIAIFISILLFII, ELPWGVLILFGGGLALAKGIS, GVSPILIVIVITIFVLFLTEV, MILPILATLSVAVGVHPLLLM, AMAANCAYMLPVGTPPNAIIF, and LISAIIIILVVYYVMPIVLGI.

This sequence belongs to the SLC13A/DASS transporter (TC 2.A.47) family. NADC subfamily.

It localises to the cell membrane. Mediates the transport of the dicarboxylates fumarate, malate, and succinate across the cytoplasmic membrane via a Na(+)-electrochemical gradient. The protein is Sodium-dependent dicarboxylate transporter SdcS (sdcS) of Staphylococcus aureus (strain USA300).